The chain runs to 348 residues: Inactive rhomboid-related protein 2 (348 aa).

The EF-hand domain occupies 14 to 49; the sequence is IEASSWIRIFRAFDTDHDGLIQCEEMQKTIRDSTYS. Ca(2+)-binding residues include Asp27, Asp29, Asp31, and Glu38. 7 helical membrane-spanning segments follow: residues 121-141, 177-197, 207-227, 229-249, 263-283, 290-310, and 323-343; these read PPIF…YYVV, LINV…AIGV, IYIL…ALDP, VFLC…ITTI, LPIL…QRFF, VSMY…FILF, and FWVS…LIAA.

It belongs to the peptidase S54 family.

It is found in the membrane. Its function is as follows. Probable inactive serine protease. The sequence is that of Inactive rhomboid-related protein 2 from Caenorhabditis elegans.